A 288-amino-acid polypeptide reads, in one-letter code: uncharacterized protein (288 aa).

The 182-residue stretch at 107 to 288 (KQIPTLIGPQ…LAIQLLASIA (182 aa)) folds into the ATP-grasp domain. Residues K145 and 178–188 (QQYIATSNSEA) each bind ATP. Mg(2+)-binding residues include D248, E261, and N263. The Mn(2+) site is built by D248, E261, and N263.

This sequence belongs to the RimK family.

This is an uncharacterized protein from Mycoplasma pneumoniae (strain ATCC 29342 / M129 / Subtype 1) (Mycoplasmoides pneumoniae).